A 615-amino-acid polypeptide reads, in one-letter code: Protein DBF4 homolog B (615 aa).

One can recognise a BRCT domain in the interval alanine 43–serine 133. Disordered stretches follow at residues arginine 93 to proline 141 and phenylalanine 264 to methionine 293. The segment covering histidine 275–proline 284 has biased composition (basic and acidic residues). A DBF4-type zinc finger spans residues proline 294 to serine 343. The Zn(2+) site is built by cysteine 301, cysteine 304, histidine 314, and histidine 320. The tract at residues threonine 371–arginine 407 is disordered.

As to quaternary structure, forms a complex with CDC7. Note that CDC7 forms distinct complex either with DBF4/DBF4A or DBF4B. Such complexes are stable upon replication stress. In terms of processing, phosphorylated. Widely expressed. Highly expressed in testis.

Its subcellular location is the nucleus. Regulatory subunit for CDC7 which activates its kinase activity thereby playing a central role in DNA replication and cell proliferation. Required for progression of S and M phases. The complex CDC7-DBF4B selectively phosphorylates MCM2 subunit at 'Ser-40' and then is involved in regulating the initiation of DNA replication during cell cycle. The polypeptide is Protein DBF4 homolog B (DBF4B) (Homo sapiens (Human)).